A 394-amino-acid polypeptide reads, in one-letter code: Phosphoglycerate kinase (394 aa).

Residues Asp21–Asn23, Arg36, His59–Arg62, Arg118, and Arg151 each bind substrate. Position 183 is a phosphoserine (Ser183). ATP-binding residues include Lys201 and Gly292. Thr299 is subject to Phosphothreonine. ATP is bound by residues Glu323 and Gly350–Ser353.

The protein belongs to the phosphoglycerate kinase family. Monomer.

Its subcellular location is the cytoplasm. It catalyses the reaction (2R)-3-phosphoglycerate + ATP = (2R)-3-phospho-glyceroyl phosphate + ADP. The protein operates within carbohydrate degradation; glycolysis; pyruvate from D-glyceraldehyde 3-phosphate: step 2/5. The sequence is that of Phosphoglycerate kinase from Bacillus mycoides (strain KBAB4) (Bacillus weihenstephanensis).